The following is a 274-amino-acid chain: 2,3,4,5-tetrahydropyridine-2,6-dicarboxylate N-succinyltransferase (274 aa).

Substrate contacts are provided by Arg105 and Asp142.

Belongs to the transferase hexapeptide repeat family. In terms of assembly, homotrimer.

The protein resides in the cytoplasm. It carries out the reaction (S)-2,3,4,5-tetrahydrodipicolinate + succinyl-CoA + H2O = (S)-2-succinylamino-6-oxoheptanedioate + CoA. It functions in the pathway amino-acid biosynthesis; L-lysine biosynthesis via DAP pathway; LL-2,6-diaminopimelate from (S)-tetrahydrodipicolinate (succinylase route): step 1/3. The chain is 2,3,4,5-tetrahydropyridine-2,6-dicarboxylate N-succinyltransferase from Thiobacillus denitrificans (strain ATCC 25259 / T1).